Consider the following 513-residue polypeptide: ATP synthase subunit alpha (513 aa).

An ATP-binding site is contributed by 169-176; sequence GDRQTGKT.

It belongs to the ATPase alpha/beta chains family. As to quaternary structure, F-type ATPases have 2 components, CF(1) - the catalytic core - and CF(0) - the membrane proton channel. CF(1) has five subunits: alpha(3), beta(3), gamma(1), delta(1), epsilon(1). CF(0) has three main subunits: a(1), b(2) and c(9-12). The alpha and beta chains form an alternating ring which encloses part of the gamma chain. CF(1) is attached to CF(0) by a central stalk formed by the gamma and epsilon chains, while a peripheral stalk is formed by the delta and b chains.

The protein localises to the cell inner membrane. The catalysed reaction is ATP + H2O + 4 H(+)(in) = ADP + phosphate + 5 H(+)(out). Its function is as follows. Produces ATP from ADP in the presence of a proton gradient across the membrane. The alpha chain is a regulatory subunit. This chain is ATP synthase subunit alpha, found in Glaesserella parasuis serovar 5 (strain SH0165) (Haemophilus parasuis).